The primary structure comprises 126 residues: Large ribosomal subunit protein bL20c (126 aa).

It belongs to the bacterial ribosomal protein bL20 family.

The protein resides in the plastid. It is found in the chloroplast. Functionally, binds directly to 23S ribosomal RNA and is necessary for the in vitro assembly process of the 50S ribosomal subunit. It is not involved in the protein synthesizing functions of that subunit. This Guizotia abyssinica (Niger) protein is Large ribosomal subunit protein bL20c.